Reading from the N-terminus, the 114-residue chain is Pole-localizer protein TmaR (114 aa).

The stretch at 70–111 forms a coiled coil; the sequence is RDDYESRVDDYTIRNAELSKQRREASTKMKEQKKAHAELLKN. Positions 89–114 are disordered; it reads KQRREASTKMKEQKKAHAELLKNAEK.

This sequence belongs to the pole-localizer TmaR family.

It is found in the cytoplasm. In terms of biological role, pole-localizer protein involved in the regulation of several cellular processes. This Haemophilus influenzae (strain PittEE) protein is Pole-localizer protein TmaR.